A 152-amino-acid polypeptide reads, in one-letter code: Snaclec 5 (152 aa).

Positions 1–23 are cleaved as a signal peptide; it reads MGRFIFLSSGLLVVFLSLSGTGA. Intrachain disulfides connect Cys27-Cys38, Cys55-Cys148, and Cys123-Cys140. The 116-residue stretch at 34–149 folds into the C-type lectin domain; the sequence is YGQHCYRAFK…CASHNPFVCK (116 aa).

Belongs to the snaclec family. Heterodimer; disulfide-linked. Expressed by the venom gland.

The protein localises to the secreted. Its function is as follows. Interferes with one step of hemostasis (modulation of platelet aggregation, or coagulation cascade, for example). The sequence is that of Snaclec 5 from Bitis arietans (African puff adder).